The following is a 92-amino-acid chain: Kinetoplastid membrane protein 11 (92 aa).

Omega-N-methylarginine is present on Arg-45.

Belongs to the KMP-11 family. In terms of assembly, monomer. A minor in vivo processed fragment (IVP) also exists, probably as a result of proteolysis. In terms of processing, probably O-glycosylated. Contains equimolar amounts of galactosamine, galactose, glucose and mannose. Post-translationally, the N-terminus is blocked.

The protein localises to the cytoplasm. It localises to the cytoskeleton. May be involved in the regulation of the cytoskeleton through interaction with the subpellicular microtubules. May be involved in parasite mobility and attachment to the surface of the host cell. Strongly stimulates T-cell proliferation and is thought to play a role in the immunology of leishmaniasis. The chain is Kinetoplastid membrane protein 11 (KMP-11) from Leishmania donovani.